A 435-amino-acid polypeptide reads, in one-letter code: GTPase Der (435 aa).

2 consecutive EngA-type G domains span residues 2–167 (ATVV…RESG) and 178–351 (PKIA…ESYC). GTP contacts are provided by residues 8-15 (GRANVGKS), 55-59 (DTCGV), 118-121 (NKSE), 184-191 (GKPNVGKS), 231-235 (DTAGM), and 297-300 (NKFD). Positions 352-435 (RKVPQQLLSK…PLVIEFKSRR (84 aa)) constitute a KH-like domain.

The protein belongs to the TRAFAC class TrmE-Era-EngA-EngB-Septin-like GTPase superfamily. EngA (Der) GTPase family. Associates with the 50S ribosomal subunit.

In terms of biological role, GTPase that plays an essential role in the late steps of ribosome biogenesis. This Pseudothermotoga lettingae (strain ATCC BAA-301 / DSM 14385 / NBRC 107922 / TMO) (Thermotoga lettingae) protein is GTPase Der.